Consider the following 287-residue polypeptide: Urease accessory protein UreD (287 aa).

It belongs to the UreD family. UreD, UreF and UreG form a complex that acts as a GTP-hydrolysis-dependent molecular chaperone, activating the urease apoprotein by helping to assemble the nickel containing metallocenter of UreC. The UreE protein probably delivers the nickel.

Its subcellular location is the cytoplasm. In terms of biological role, required for maturation of urease via the functional incorporation of the urease nickel metallocenter. The protein is Urease accessory protein UreD of Aliivibrio fischeri (strain MJ11) (Vibrio fischeri).